The primary structure comprises 298 residues: N-acetylmuramic acid 6-phosphate etherase (298 aa).

Residues 55–218 (IHAQVSGGGR…STGLMIKSGK (164 aa)) enclose the SIS domain. Residue glutamate 83 is the Proton donor of the active site. Glutamate 114 is an active-site residue.

It belongs to the GCKR-like family. MurNAc-6-P etherase subfamily. In terms of assembly, homodimer.

It carries out the reaction N-acetyl-D-muramate 6-phosphate + H2O = N-acetyl-D-glucosamine 6-phosphate + (R)-lactate. Its pathway is amino-sugar metabolism; 1,6-anhydro-N-acetylmuramate degradation. It participates in amino-sugar metabolism; N-acetylmuramate degradation. It functions in the pathway cell wall biogenesis; peptidoglycan recycling. Functionally, specifically catalyzes the cleavage of the D-lactyl ether substituent of MurNAc 6-phosphate, producing GlcNAc 6-phosphate and D-lactate. Together with AnmK, is also required for the utilization of anhydro-N-acetylmuramic acid (anhMurNAc) either imported from the medium or derived from its own cell wall murein, and thus plays a role in cell wall recycling. The sequence is that of N-acetylmuramic acid 6-phosphate etherase from Escherichia coli (strain SMS-3-5 / SECEC).